The chain runs to 349 residues: tRNA pseudouridine synthase D (349 aa).

Substrate is bound at residue F27. D80 (nucleophile) is an active-site residue. A substrate-binding site is contributed by N129. Residues 155–303 (GVPNYFGAQR…VEAARRAMLL (149 aa)) form the TRUD domain. F329 serves as a coordination point for substrate.

The protein belongs to the pseudouridine synthase TruD family.

It carries out the reaction uridine(13) in tRNA = pseudouridine(13) in tRNA. Responsible for synthesis of pseudouridine from uracil-13 in transfer RNAs. The protein is tRNA pseudouridine synthase D of Escherichia coli O127:H6 (strain E2348/69 / EPEC).